We begin with the raw amino-acid sequence, 624 residues long: Kelch-like ECH-associated protein 1 (624 aa).

The disordered stretch occupies residues 1–27; the sequence is MQPEPRPSGAGAHTQFLPLRSQRPEGA. Cys-38 is modified (S-(2-succinyl)cysteine). Positions 77–149 constitute a BTB domain; that stretch reads CDVTLQVKYE…AYTASISMGE (73 aa). Arg-135 participates in a covalent cross-link: N5-[4-(S-L-cysteinyl)-5-methyl-1H-imidazol-2-yl]-L-ornithine (Arg-Cys) (interchain with C-151 in KEAP1). S-(2-succinyl)cysteine occurs at positions 151 and 241. S-(2,3-dicarboxypropyl)cysteine; alternate is present on Cys-151. Cys-151 carries the post-translational modification S-nitrosocysteine; alternate. Cys-151 is covalently cross-linked (N5-[4-(S-L-cysteinyl)-5-methyl-1H-imidazol-2-yl]-L-ornithine (Cys-Arg) (interchain with R-135 in KEAP1)). A BACK domain is found at 184 to 286; the sequence is AIGIANFAEQ…TPHFLQMQLQ (103 aa). An S-(2,3-dicarboxypropyl)cysteine mark is found at Cys-257 and Cys-273. An S-(2-succinyl)cysteine mark is found at Cys-288 and Cys-319. Cys-288 carries the post-translational modification S-(2,3-dicarboxypropyl)cysteine; alternate. Kelch repeat units follow at residues 327 to 372, 373 to 423, 424 to 470, 471 to 517, 519 to 564, and 565 to 611; these read LIYT…VVGG, LLYA…VIDG, HIYA…VLNR, LLYA…VLHN, IYAA…VHQG, and RIYV…VTME. Cys-434 is subject to S-cGMP-cysteine. Position 613 is an S-(2-succinyl)cysteine (Cys-613).

It belongs to the KEAP1 family. As to quaternary structure, component of the BCR(KEAP1) E3 ubiquitin ligase complex, at least composed of 2 molecules of CUL3, 2 molecules of KEAP1, and RBX1. Interacts with NFE2L2/NRF2; the interaction is direct. Forms a ternary complex with NFE2L2/NRF2 and PGAM5. Interacts with (phosphorylated) SQSTM1/p62; the interaction is direct and inactivates the BCR(KEAP1) complex by sequestering it in inclusion bodies, promoting its degradation. Interacts with NFE2L1. Interacts with BPTF and PTMA. Interacts with MAP1LC3B. Interacts indirectly with ENC1. Interacts with SESN1 and SESN2. Interacts with HSP90AA1 and HSP90AB1. Interacts with PGCKA1; this interaction prevents the ubiquitination of KEAP1 by TRIM25, thus protecting KEAP1 protein from degradation. In terms of processing, non-enzymatic covalent modifications of reactive cysteines by electrophile metabolites inactivate the BCR(KEAP1) complex. Accumulation of fumarate promotes the formation of cysteine S-succination (S-(2-succinyl)cysteine), leading to inactivate the BCR(KEAP1) complex and promote NFE2L2/NRF2 nuclear accumulation and activation. Nitric oxide-dependent 8-Nitro-cGMP formation promotes cysteine guanylation (S-cGMP-cysteine), leading to NFE2L2/NRF2 nuclear accumulation and activation. Itaconate, an anti-inflammatory metabolite generated in response to lipopolysaccharide, alkylates cysteines, activating NFE2L2/NRF2. Methylglyoxal, a reactive metabolite that accumulates when the glycolytic enzyme PGK1 is inhibited, promotes formation of a methylimidazole cross-link between proximal Cys-151 and Arg-135 on another KEAP1 molecule, resulting in an inactive dimer that inactivates the BCR(KEAP1) complex. Post-translationally, degraded via a proteasomal-independent process during selective autophagy: interaction with phosphorylated SQSTM1/p62 sequesters KEAP1 in inclusion bodies, leading to its degradation. Auto-ubiquitinated by the BCR(KEAP1) complex. Quinone-induced oxidative stress, but not sulforaphane, increases its ubiquitination. Ubiquitination and subsequent degradation is most pronounced following prolonged exposure of cells to oxidative stress, particularly in glutathione-deficient cells that are highly susceptible to oxidative stress. Deubiquitinated by USP25; leading to stabilization. Ubiquitinated by TRIM25; leading to degradation upon ER stress.

Its subcellular location is the cytoplasm. It localises to the nucleus. It participates in protein modification; protein ubiquitination. Its activity is regulated as follows. Ubiquitin ligase activity of the BCR(KEAP1) complex is inhibited by oxidative stress and electrophile metabolites such as sulforaphane. Electrophile metabolites react with reactive cysteine residues in KEAP1 and trigger non-enzymatic covalent modifications of these cysteine residues, leading to inactivate the ubiquitin ligase activity of the BCR(KEAP1) complex. Selective autophagy also inactivates the BCR(KEAP1) complex via interaction between KEAP1 and SQSTM1/p62, which sequesters the complex in inclusion bodies and promotes its degradation. Functionally, substrate-specific adapter of a BCR (BTB-CUL3-RBX1) E3 ubiquitin ligase complex that regulates the response to oxidative stress by targeting NFE2L2/NRF2 for ubiquitination. KEAP1 acts as a key sensor of oxidative and electrophilic stress: in normal conditions, the BCR(KEAP1) complex mediates ubiquitination and degradation of NFE2L2/NRF2, a transcription factor regulating expression of many cytoprotective genes. In response to oxidative stress, different electrophile metabolites trigger non-enzymatic covalent modifications of highly reactive cysteine residues in KEAP1, leading to inactivate the ubiquitin ligase activity of the BCR(KEAP1) complex, promoting NFE2L2/NRF2 nuclear accumulation and expression of phase II detoxifying enzymes. In response to selective autophagy, KEAP1 is sequestered in inclusion bodies following its interaction with SQSTM1/p62, leading to inactivation of the BCR(KEAP1) complex and activation of NFE2L2/NRF2. The BCR(KEAP1) complex also mediates ubiquitination of SQSTM1/p62, increasing SQSTM1/p62 sequestering activity and degradation. The BCR(KEAP1) complex also targets BPTF and PGAM5 for ubiquitination and degradation by the proteasome. In Sus scrofa (Pig), this protein is Kelch-like ECH-associated protein 1.